The chain runs to 130 residues: Small ribosomal subunit protein uS9 (130 aa).

The protein belongs to the universal ribosomal protein uS9 family.

This Edwardsiella ictaluri (strain 93-146) protein is Small ribosomal subunit protein uS9.